Consider the following 173-residue polypeptide: Pathogenesis-related protein 1A/1B (173 aa).

Residues 1–20 (MSTSAVLFLLLAVFAAGASA) form the signal peptide.

Belongs to the thaumatin family.

The chain is Pathogenesis-related protein 1A/1B from Hordeum vulgare (Barley).